The sequence spans 292 residues: 5,10-methylenetetrahydrofolate reductase (292 aa).

The active-site Proton donor/acceptor is glutamate 28. Threonine 59 serves as a coordination point for NADH. FAD-binding residues include tyrosine 60, alanine 62, histidine 88, arginine 118, glycine 119, aspartate 120, alanine 132, tyrosine 152, histidine 156, aspartate 165, asparagine 168, lysine 171, and lysine 172. Aspartate 120 provides a ligand contact to (6S)-5-methyl-5,6,7,8-tetrahydrofolate. Glutamine 183 is a binding site for NADH. (6S)-5-methyl-5,6,7,8-tetrahydrofolate is bound by residues glutamine 183, glutamine 219, and lysine 279.

Belongs to the methylenetetrahydrofolate reductase family. FAD serves as cofactor.

The catalysed reaction is (6S)-5-methyl-5,6,7,8-tetrahydrofolate + NAD(+) = (6R)-5,10-methylene-5,6,7,8-tetrahydrofolate + NADH + H(+). The protein operates within one-carbon metabolism; tetrahydrofolate interconversion. It functions in the pathway amino-acid biosynthesis; L-methionine biosynthesis via de novo pathway. Functionally, catalyzes the NADH-dependent reduction of 5,10-methylenetetrahydrofolate to 5-methyltetrahydrofolate. Is required to provide the methyl group necessary for methionine synthetase to convert homocysteine to methionine; the methyl group is given by 5-methyltetrahydrofolate. This is 5,10-methylenetetrahydrofolate reductase (metF) from Buchnera aphidicola subsp. Schizaphis graminum (strain Sg).